We begin with the raw amino-acid sequence, 216 residues long: Glycerol-3-phosphate acyltransferase (216 aa).

5 helical membrane-spanning segments follow: residues 5–25 (LIAL…FGLV), 70–90 (IAAA…AGAF), 118–138 (VVFW…AAIF), 140–160 (ISSL…LAWG), and 164–184 (VAIM…ANIS). Basic and acidic residues predominate over residues 192–201 (PRIGGKKSET). Positions 192–216 (PRIGGKKSETSADVSDGDDPDTPAT) are disordered. Residues 206-216 (SDGDDPDTPAT) show a composition bias toward acidic residues.

This sequence belongs to the PlsY family. In terms of assembly, probably interacts with PlsX.

The protein localises to the cell inner membrane. It carries out the reaction an acyl phosphate + sn-glycerol 3-phosphate = a 1-acyl-sn-glycero-3-phosphate + phosphate. It participates in lipid metabolism; phospholipid metabolism. Catalyzes the transfer of an acyl group from acyl-phosphate (acyl-PO(4)) to glycerol-3-phosphate (G3P) to form lysophosphatidic acid (LPA). This enzyme utilizes acyl-phosphate as fatty acyl donor, but not acyl-CoA or acyl-ACP. This is Glycerol-3-phosphate acyltransferase from Maricaulis maris (strain MCS10) (Caulobacter maris).